The chain runs to 340 residues: Phenylalanine--tRNA ligase alpha subunit (340 aa).

A Mg(2+)-binding site is contributed by E254.

Belongs to the class-II aminoacyl-tRNA synthetase family. Phe-tRNA synthetase alpha subunit type 1 subfamily. In terms of assembly, tetramer of two alpha and two beta subunits. Mg(2+) is required as a cofactor.

Its subcellular location is the cytoplasm. It carries out the reaction tRNA(Phe) + L-phenylalanine + ATP = L-phenylalanyl-tRNA(Phe) + AMP + diphosphate + H(+). In Caldicellulosiruptor saccharolyticus (strain ATCC 43494 / DSM 8903 / Tp8T 6331), this protein is Phenylalanine--tRNA ligase alpha subunit.